The sequence spans 502 residues: Lysine--tRNA ligase (502 aa).

Mg(2+)-binding residues include glutamate 398 and glutamate 405.

This sequence belongs to the class-II aminoacyl-tRNA synthetase family. As to quaternary structure, homodimer. Requires Mg(2+) as cofactor.

Its subcellular location is the cytoplasm. It carries out the reaction tRNA(Lys) + L-lysine + ATP = L-lysyl-tRNA(Lys) + AMP + diphosphate. This Thermosipho melanesiensis (strain DSM 12029 / CIP 104789 / BI429) protein is Lysine--tRNA ligase.